Reading from the N-terminus, the 283-residue chain is Bis(5'-nucleosyl)-tetraphosphatase, symmetrical (283 aa).

This sequence belongs to the Ap4A hydrolase family.

The enzyme catalyses P(1),P(4)-bis(5'-adenosyl) tetraphosphate + H2O = 2 ADP + 2 H(+). Hydrolyzes diadenosine 5',5'''-P1,P4-tetraphosphate to yield ADP. The chain is Bis(5'-nucleosyl)-tetraphosphatase, symmetrical from Pseudomonas fluorescens (strain SBW25).